The following is a 322-amino-acid chain: uncharacterized protein (322 aa).

Composition is skewed to basic residues over residues 1–16 (MPGNSRRRGAVRKSGT) and 43–61 (LRPHHPAAKRARAQPRRPV). Positions 1-69 (MPGNSRRRGA…PVKRADETET (69 aa)) are disordered. Glycine 261, isoleucine 281, and leucine 290 together coordinate S-adenosyl-L-methionine.

This sequence belongs to the class IV-like SAM-binding methyltransferase superfamily. RNA methyltransferase TrmH family.

This is an uncharacterized protein from Mycobacterium bovis (strain ATCC BAA-935 / AF2122/97).